Here is a 706-residue protein sequence, read N- to C-terminus: Drebrin (706 aa).

Ala-2 is modified (N-acetylalanine). The ADF-H domain maps to 3–134; sequence GVSFSGHRLE…DAGAIGQRLS (132 aa). 2 positions are modified to phosphoserine: Ser-141 and Ser-142. Residues 209-236 are compositionally biased toward basic and acidic residues; it reads ERMEQERQEQEERERRYREREQQIEEHR. Residues 209-497 form a disordered region; sequence ERMEQERQEQ…AEPAASVTSV (289 aa). Ser-241 is subject to Phosphoserine. Positions 288 to 298 are enriched in basic and acidic residues; sequence DNPREFFRQQE. Low complexity predominate over residues 331 to 345; that stretch reads SDSGPSSSSSSSSSP. Ser-344 carries the phosphoserine modification. Positions 357–366 are enriched in polar residues; it reads RTPNLSSSLP. Phosphothreonine is present on residues Thr-379 and Thr-383. Over residues 382 to 396 the composition is skewed to polar residues; the sequence is PTRSPSDSSTASTPI. A phosphoserine mark is found at Ser-385, Ser-387, and Ser-393. Thr-394 carries the post-translational modification Phosphothreonine. Over residues 411-422 the composition is skewed to pro residues; that stretch reads QPPPPPPPPPPT. The span at 453–497 shows a compositional bias: low complexity; the sequence is AAEPPQAQEPPLLQSSPLEDSMCTESPEQAALAAPAEPAASVTSV. Phosphoserine is present on Ser-468. Thr-550 is subject to Phosphothreonine. Residues 633 to 677 are disordered; the sequence is EPHLLTNGETTQKEGTQASEGYFSQSQEEEFAQSEEPCAKVPPPV. The span at 639 to 651 shows a compositional bias: polar residues; that stretch reads NGETTQKEGTQAS. The residue at position 658 (Ser-658) is a Phosphoserine.

As to quaternary structure, interacts with RUFY3. Interacts with CXCR4; this interaction is enhanced by antigenic stimulation. Interacts (via ADF-H domain) with ZMYND8 (via N-terminus); the interaction leads to sequestering of ZMYND8 in the cytoplasm. Expressed in the hippocampus, with expression in the pyramidal cells of CA1, CA2 and CA3 and in the granule cells of the dentate gyrus (at protein level). Highly expressed in brain, also present in stomach and to a lesser degree in kidney, colon, and urinary bladder. The E2 isoform is specifically expressed in adult stomach, kidney, and cultured cells.

The protein resides in the cytoplasm. It localises to the cell projection. The protein localises to the dendrite. Its subcellular location is the cell cortex. It is found in the cell junction. The protein resides in the growth cone. Its function is as follows. Actin cytoskeleton-organizing protein that plays a role in the formation of cell projections. Required for actin polymerization at immunological synapses (IS) and for the recruitment of the chemokine receptor CXCR4 to IS. Plays a role in dendritic spine morphogenesis and organization, including the localization of the dopamine receptor DRD1 to the dendritic spines. Involved in memory-related synaptic plasticity in the hippocampus. The sequence is that of Drebrin (Dbn1) from Mus musculus (Mouse).